Consider the following 899-residue polypeptide: Gamma-aminobutyric acid type B receptor subunit 1 (899 aa).

Positions 1 to 19 (MFVRSSWLLLWGTIVWASA) are cleaved as a signal peptide. Topologically, residues 20–447 (EPVTLHIGGT…KKHAMTVSNE (428 aa)) are extracellular. N-linked (GlcNAc...) asparagine glycans are attached at residues N69, N266, N339, N353, and N371. A helical transmembrane segment spans residues 448 to 468 (FYYPTILFAVLGIAACVFIYL). The Cytoplasmic portion of the chain corresponds to 469–487 (FTQKHHERLIIFQSQPECN). Residues 488–508 (NILLIGCSLCLFSLFLIGLPS) form a helical membrane-spanning segment. The Extracellular portion of the chain corresponds to 509 to 525 (DDISISESLFPLLCHAR). Residues 526 to 546 (VTILLFGFTFAYGSMFAKVWI) traverse the membrane as a helical segment. The Cytoplasmic portion of the chain corresponds to 547-616 (VHRMGATENQ…LNQPISSSKF (70 aa)). A helical transmembrane segment spans residues 617-637 (YVIVAALTAVDVFVCFVWVLI). Residues 638–674 (DPLHLTEQKFPLFTPADSEEDEMIMPVLQQCQSNQQE) lie on the Extracellular side of the membrane. The helical transmembrane segment at 675-695 (VWIGIIMGFKCLLLVFGTFLS) threads the bilayer. Over 696-713 (YETRNLKLRFINDSRFVG) the chain is Cytoplasmic. A helical membrane pass occupies residues 714–734 (LAIYNVAVMTLVTAPVVTLLI). At 735–741 (HGKVDAN) the chain is on the extracellular side. A helical membrane pass occupies residues 742–762 (FAFISLTVLICTYISVGLIYG). The Cytoplasmic segment spans residues 763–899 (PKIRHIIKVP…SSTSSDEILL (137 aa)). Residues 791 to 842 (KVDQKRYDMLKKENETLQIQIEEKERKIHECKERLEELTKNSETEDMNAQLL) adopt a coiled-coil conformation. The tract at residues 870-899 (DLQNGNHPGQIYENDNDDDGSSTSSDEILL) is disordered. The span at 890–899 (SSTSSDEILL) shows a compositional bias: low complexity.

It belongs to the G-protein coupled receptor 3 family. May form a heterodimer with gbb-2. Expressed in the nervous system, including cholinergic motor neurons, but not in GABAergic motor neurons or muscle.

The protein resides in the cell membrane. In terms of biological role, component of a heterodimeric G-protein coupled receptor for GABA, formed by gbb-1 and gbb-2. Within the heterodimeric GABA receptor, only gbb-1 seems to bind agonists, while gbb-2 mediates coupling to G proteins. Ligand binding causes a conformation change that triggers signaling via guanine nucleotide-binding proteins (G proteins) and modulates the activity of down-stream effectors, such as adenylate cyclase. Signaling inhibits adenylate cyclase, stimulates phospholipase A2, activates potassium channels, inactivates voltage-dependent calcium-channels and modulates inositol phospholipid hydrolysis. Calcium is required for high affinity binding to GABA. Plays a critical role in the fine-tuning of inhibitory synaptic transmission. Pre-synaptic GABA receptor inhibits neurotransmitter release by down-regulating high-voltage activated calcium channels, whereas postsynaptic GABA receptor decreases neuronal excitability by activating a prominent inwardly rectifying potassium (Kir) conductance that underlies the late inhibitory postsynaptic potentials. Along with gbb-2, may couple to the G(o)-alpha G-protein goa-1 to negatively regulate cholinergic receptor activity in the presence of high levels of acetylcholine in ventral cord motor neurons. As acetylcholine depolarizes body wall muscles, modulation of acetylcholine levels most likely results in the control of locomotory behavior. Acts in neurons to regulate lifespan, and this may be through G-protein-egl-8/PLC-beta signaling to the transcription factor daf-16/FOXO. This Caenorhabditis elegans protein is Gamma-aminobutyric acid type B receptor subunit 1.